The following is a 615-amino-acid chain: Homologous recombination OB-fold protein (615 aa).

Disordered stretches follow at residues 42–75, 213–326, and 546–590; these read LRPVSSRPQETVQTQSSRPVPSYPTSNQSVPRLC, PWPS…PVTQ, and DFLE…FPEE. Residue S47 is modified to Phosphoserine. Polar residues-rich tracts occupy residues 47 to 71, 232 to 241, and 257 to 275; these read SRPQETVQTQSSRPVPSYPTSNQSV, SCVSTSQQRG, and IRSSPQNYGPGQPLQSPRA. A compositionally biased stretch (low complexity) spans 302–317; sequence SSRAPVSSVESPVSTP.

As to quaternary structure, interacts with MCM8; this interaction is necessary for MCM8-MCM9 helicase complex recruitment to DNA damage sites. Interacts with RPA1; this interaction associates HROB with the RPA complex.

It localises to the nucleus. The protein localises to the chromosome. Its function is as follows. DNA-binding protein involved in homologous recombination that acts by recruiting the MCM8-MCM9 helicase complex to sites of DNA damage to promote DNA repair synthesis. This is Homologous recombination OB-fold protein from Mus musculus (Mouse).